We begin with the raw amino-acid sequence, 539 residues long: Chloride channel CLIC-like protein 1 (539 aa).

The first 18 residues, 1–18 (MLCRLLLCECLLLITGYA), serve as a signal peptide directing secretion. The Lumenal portion of the chain corresponds to 19–184 (HDDDWIDPTD…EDYFGVDPYN (166 aa)). Residues 41–61 (KSQVRSGTSEKKEVSPDSSEA) are disordered. A helical transmembrane segment spans residues 185-205 (VFMVLLCLLCLVVLVATELWT). At 206 to 215 (YVRWYTQMKR) the chain is on the cytoplasmic side. Residues 216-236 (IFIISFLLSLAWNWIYLYKMA) form a helical membrane-spanning segment. Over 237-329 (FAQHQANIAG…GEFIKALMKE (93 aa)) the chain is Lumenal. Residues 330-350 (IPVLLQIPVLAILALAVLSFC) traverse the membrane as a helical segment. Topologically, residues 351 to 539 (YGAGRSVPML…GTEPVSSPCG (189 aa)) are cytoplasmic. The tract at residues 361 to 410 (RHFGGPDREPPRALEPDDRRRQKGLDYRLHGGAGDADFSYRGPAGSIEQG) is disordered. The span at 364–389 (GGPDREPPRALEPDDRRRQKGLDYRL) shows a compositional bias: basic and acidic residues. Residues Ser-429, Ser-433, and Ser-459 each carry the phosphoserine modification. Residues 444–539 (DTEAQEHPEV…GTEPVSSPCG (96 aa)) form a disordered region. The segment covering 475–485 (STPTEYSQSAK) has biased composition (polar residues). Phosphothreonine is present on Thr-476. 3 positions are modified to phosphoserine: Ser-498, Ser-513, and Ser-521. The span at 512-521 (CSPPGGCPPS) shows a compositional bias: low complexity.

Belongs to the chloride channel MCLC family. In terms of assembly, homomultimers. Interacts with mitochondrial protein PIGBOS1 (via C-terminus); the interaction occurs at the mitochondria-associated endoplasmic reticulum (ER) membrane, a zone of contact between the ER and mitochondrial membranes, but does not appear to play a role in ER-mitochondria tethering and is not affected by ER stress. Interacts with CALR. As to expression, expressed in cerebellum (at protein level).

The protein localises to the endoplasmic reticulum membrane. The enzyme catalyses chloride(in) = chloride(out). The catalysed reaction is bromide(in) = bromide(out). It catalyses the reaction nitrate(in) = nitrate(out). It carries out the reaction fluoride(in) = fluoride(out). Its activity is regulated as follows. Activated by membrane phosphatidylinositol 4,5-bisphosphate (PI(4,5)P2, PIP2). Inhibited by lumenal Ca(2+). Anion-selective channel with Ca(2+)-dependent and voltage-independent gating. Permeable to small monovalent anions with selectivity for bromide &gt; chloride &gt; nitrate &gt; fluoride. Operates in the endoplasmic reticulum (ER) membrane where it mediates chloride efflux to compensate for the loss of positive charges from the ER lumen upon Ca(2+) release. Contributes to the maintenance of ER Ca(2+) pools and activation of unfolded protein response to prevent accumulation of misfolded proteins in the ER lumen. Particularly involved in ER homeostasis mechanisms underlying motor neurons and retinal photoreceptors survival. The chain is Chloride channel CLIC-like protein 1 from Mus musculus (Mouse).